A 136-amino-acid polypeptide reads, in one-letter code: DNA-directed RNA polymerase subunit omega (136 aa).

Residues 90–102 (SSPAAAAVAPQSS) show a composition bias toward low complexity. A disordered region spans residues 90 to 136 (SSPAAAAVAPQSSSDDKDVQFDRMSEEDLLRGLENLAPPTETDDEGE). The segment covering 103-120 (SDDKDVQFDRMSEEDLLR) has biased composition (basic and acidic residues).

This sequence belongs to the RNA polymerase subunit omega family. In terms of assembly, the RNAP catalytic core consists of 2 alpha, 1 beta, 1 beta' and 1 omega subunit. When a sigma factor is associated with the core the holoenzyme is formed, which can initiate transcription.

It catalyses the reaction RNA(n) + a ribonucleoside 5'-triphosphate = RNA(n+1) + diphosphate. Functionally, promotes RNA polymerase assembly. Latches the N- and C-terminal regions of the beta' subunit thereby facilitating its interaction with the beta and alpha subunits. The protein is DNA-directed RNA polymerase subunit omega of Methylorubrum populi (strain ATCC BAA-705 / NCIMB 13946 / BJ001) (Methylobacterium populi).